The sequence spans 356 residues: Guanine nucleotide-binding protein alpha-2 subunit (356 aa).

Residue Gly2 is the site of N-myristoyl glycine attachment. Cys4 is lipidated: S-palmitoyl cysteine. The 322-residue stretch at 35 to 356 (REVKLLLLGA…LTNNLRDIVL (322 aa)) folds into the G-alpha domain. The segment at 38-51 (KLLLLGAGESGKST) is G1 motif. GTP-binding residues include Glu46, Ser47, Gly48, Lys49, Ser50, Thr51, Asp153, Leu178, Thr184, Gly206, Asn272, Lys273, Asp275, and Ala329. Ser50 serves as a coordination point for Mg(2+). The interval 176–184 (DILRCRNKT) is G2 motif. Thr184 is a binding site for Mg(2+). A G3 motif region spans residues 199–208 (YRIFDVGGQR). Residues 268 to 275 (ILFLNKVD) form a G4 motif region. A G5 motif region spans residues 327-332 (TNATDV).

The protein belongs to the G-alpha family. As to quaternary structure, g proteins are composed of 3 units; alpha, beta and gamma. The alpha chain contains the guanine nucleotide binding site. Mg(2+) is required as a cofactor.

Guanine nucleotide-binding proteins (G proteins) are involved as modulators or transducers in various transmembrane signaling systems. The protein is Guanine nucleotide-binding protein alpha-2 subunit (GPA2) of Mycosarcoma maydis (Corn smut fungus).